The chain runs to 166 residues: UPF0561 protein C2orf68 homolog (166 aa).

Positions 36 to 49 (RDDYDKKVKQAAKE) are enriched in basic and acidic residues. The tract at residues 36–108 (RDDYDKKVKQ…EPEPPGHQLF (73 aa)) is disordered.

This sequence belongs to the UPF0561 family.

The chain is UPF0561 protein C2orf68 homolog from Bos taurus (Bovine).